The primary structure comprises 270 residues: Phosphoserine phosphatase (270 aa).

The Nucleophile role is filled by Asp67. The Mg(2+) site is built by Asp67 and Asp69. The active-site Proton donor is the Asp69. Residues Glu76, Arg112, 156–157 (SG), and Lys205 contribute to the substrate site. Asp227 lines the Mg(2+) pocket.

Belongs to the HAD-like hydrolase superfamily. SerB family. Requires Mg(2+) as cofactor.

The catalysed reaction is O-phospho-L-serine + H2O = L-serine + phosphate. It carries out the reaction O-phospho-D-serine + H2O = D-serine + phosphate. The protein operates within amino-acid biosynthesis; L-serine biosynthesis; L-serine from 3-phospho-D-glycerate: step 3/3. Catalyzes the last step in the biosynthesis of serine from carbohydrates. The reaction mechanism proceeds via the formation of a phosphoryl-enzyme intermediates. This chain is Phosphoserine phosphatase (aay), found in Drosophila melanogaster (Fruit fly).